The following is a 254-amino-acid chain: MKKLVKVRGITLGEGRPKICVPLVGKNLAQLKEEAAYFQTLDADIAEWRADFYEDVDDVDQVCAALAEIRGLLKDTPLIFTFRSAAEGGEKEISTARYFSLNEAVVKTGLADVIDIELFNDEEQVKALVETAHGHEVSVIISNHDFEKTPAAEEIVSRLRKAQELGADLPKIAVMPETTADVLRLLEATCTMNEKYADRPIITMSMAGKGIISRLAGEVFGSAMTFGAAKKASAPGQIAAGELKEILHILHRNL.

3-dehydroquinate contacts are provided by residues 47–49 (EWR) and arginine 83. Residue histidine 144 is the Proton donor/acceptor of the active site. The active-site Schiff-base intermediate with substrate is the lysine 171. Positions 214, 233, and 237 each coordinate 3-dehydroquinate.

This sequence belongs to the type-I 3-dehydroquinase family. As to quaternary structure, homodimer.

The enzyme catalyses 3-dehydroquinate = 3-dehydroshikimate + H2O. The protein operates within metabolic intermediate biosynthesis; chorismate biosynthesis; chorismate from D-erythrose 4-phosphate and phosphoenolpyruvate: step 3/7. In terms of biological role, involved in the third step of the chorismate pathway, which leads to the biosynthesis of aromatic amino acids. Catalyzes the cis-dehydration of 3-dehydroquinate (DHQ) and introduces the first double bond of the aromatic ring to yield 3-dehydroshikimate. The polypeptide is 3-dehydroquinate dehydratase (Bacillus licheniformis (strain ATCC 14580 / DSM 13 / JCM 2505 / CCUG 7422 / NBRC 12200 / NCIMB 9375 / NCTC 10341 / NRRL NRS-1264 / Gibson 46)).